We begin with the raw amino-acid sequence, 369 residues long: UDP-N-acetyl-3-dehydro-alpha-D-glucosamine 3-aminotranferase (369 aa).

The residue at position 190 (Lys190) is an N6-(pyridoxal phosphate)lysine.

Belongs to the DegT/DnrJ/EryC1 family. It depends on pyridoxal 5'-phosphate as a cofactor.

The catalysed reaction is UDP-2-acetamido-3-amino-2,3-dideoxy-alpha-D-glucopyranose + 2-oxoglutarate = UDP-2-acetamido-3-dehydro-2-deoxy-alpha-D-glucopyranose + L-glutamate. It functions in the pathway bacterial outer membrane biogenesis; LPS lipid A biosynthesis. Its function is as follows. Aminotranferase involved in the synthesis of 2,3-diamino-2,3-dideoxy-D-glucopyranose (GlcN3N), which is a component of lipid A in some species. Catalyzes the amination of UDP-2-acetamido-3-dehydro-2-deoxy-alpha-D-glucopyranose (UDP-3-oxo-GlcNAc) to UDP-2-acetamido-3-amino-2,3-dideoxy-alpha-D-glucopyranose (UDP-GlcNAc3N), using L-glutamate as the amine donor. Other amine donors, such as alanine and glutamine, can substitute for glutamate, but product formation is slower. This Acidithiobacillus ferrooxidans (strain ATCC 23270 / DSM 14882 / CIP 104768 / NCIMB 8455) (Ferrobacillus ferrooxidans (strain ATCC 23270)) protein is UDP-N-acetyl-3-dehydro-alpha-D-glucosamine 3-aminotranferase.